A 222-amino-acid chain; its full sequence is Small ribosomal subunit protein uS3 (222 aa).

Residues 39–107 (VREFLHKKLA…PVQINIEEVR (69 aa)) enclose the KH type-2 domain.

This sequence belongs to the universal ribosomal protein uS3 family. As to quaternary structure, part of the 30S ribosomal subunit. Forms a tight complex with proteins S10 and S14.

Functionally, binds the lower part of the 30S subunit head. Binds mRNA in the 70S ribosome, positioning it for translation. The polypeptide is Small ribosomal subunit protein uS3 (Francisella tularensis subsp. tularensis (strain FSC 198)).